The primary structure comprises 46 residues: Endochitinase 2 (46 aa).

It belongs to the glycosyl hydrolase 19 family. Chitinase class I subfamily.

It catalyses the reaction Random endo-hydrolysis of N-acetyl-beta-D-glucosaminide (1-&gt;4)-beta-linkages in chitin and chitodextrins.. Defense against chitin-containing fungal and bacterial pathogens. The sequence is that of Endochitinase 2 from Arachis hypogaea (Peanut).